The following is a 352-amino-acid chain: Nicotinate-nucleotide--dimethylbenzimidazole phosphoribosyltransferase (352 aa).

Glu318 serves as the catalytic Proton acceptor.

It belongs to the CobT family.

The catalysed reaction is 5,6-dimethylbenzimidazole + nicotinate beta-D-ribonucleotide = alpha-ribazole 5'-phosphate + nicotinate + H(+). It functions in the pathway nucleoside biosynthesis; alpha-ribazole biosynthesis; alpha-ribazole from 5,6-dimethylbenzimidazole: step 1/2. Its function is as follows. Catalyzes the synthesis of alpha-ribazole-5'-phosphate from nicotinate mononucleotide (NAMN) and 5,6-dimethylbenzimidazole (DMB). The chain is Nicotinate-nucleotide--dimethylbenzimidazole phosphoribosyltransferase from Geobacter sulfurreducens (strain ATCC 51573 / DSM 12127 / PCA).